The following is a 227-amino-acid chain: Mitochondrial cardiolipin hydrolase (227 aa).

Topologically, residues 1–14 are mitochondrial intermembrane; the sequence is MDVFKQMSFKELMK. The chain crosses the membrane as a helical span at residues 15–33; sequence VLGLGTVAFVLGVEWLNWL. The Cytoplasmic portion of the chain corresponds to 34-227; that stretch reads TRRLRDSRGP…LQSKNGQIKK (194 aa). In terms of domain architecture, PLD phosphodiesterase spans 153-180; the sequence is SAVHMHHKFALVDGRKLISGSLNWTLTA. Catalysis depends on residues His-158, Lys-160, and Asp-165.

Belongs to the phospholipase D family. MitoPLD/Zucchini subfamily. In terms of assembly, homodimer.

Its subcellular location is the mitochondrion outer membrane. It carries out the reaction a cardiolipin + H2O = a 1,2-diacyl-sn-glycero-3-phospho-(1'-sn-glycerol) + a 1,2-diacyl-sn-glycero-3-phosphate + H(+). In terms of biological role, presents phospholipase and nuclease activities, depending on the different physiological conditions. Plays a key role in mitochondrial fusion and fission via its phospholipase activity. In its phospholipase role, it uses the mitochondrial lipid cardiolipin as substrate to generate phosphatidate (PA or 1,2-diacyl-sn-glycero-3-phosphate), a second messenger signaling lipid. Production of PA facilitates Mitofusin-mediated fusion, whereas the cleavage of PA by the Lipin family of phosphatases produces diacylgycerol (DAG) which promotes mitochondrial fission. Regulates mitochondrial shape through facilitating mitochondrial fusion. During spermatogenesis, plays a critical role in PIWI-interacting RNA (piRNA) biogenesis. piRNAs provide essential protection against the activity of mobile genetic elements. piRNA-mediated transposon silencing is thus critical for maintaining genome stability, in particular in germline cells when transposons are mobilized as a consequence of wide-spread genomic demethylation. Has been shown to be a backbone-non-specific, single strand-specific nuclease, cleaving either RNA or DNA substrates with similar affinity. Produces 5' phosphate and 3' hydroxyl termini, suggesting it could directly participate in the processing of primary piRNA transcripts. Has been proposed to act as a cardiolipin hydrolase to generate phosphatidic acid at mitochondrial surface. Although it cannot be excluded that it can act as a phospholipase in some circumstances, this activity could not be confirmed. This is Mitochondrial cardiolipin hydrolase (pld6) from Danio rerio (Zebrafish).